The primary structure comprises 374 residues: 1,3,6,8-tetrahydroxynaphthalene synthase (374 aa).

Residue cysteine 138 is part of the active site.

It belongs to the thiolase-like superfamily. Chalcone/stilbene synthases family. Homodimer.

The catalysed reaction is 5 malonyl-CoA + 5 H(+) = naphthalene-1,3,6,8-tetrol + 5 CO2 + 5 CoA + H2O. The protein operates within pigment biosynthesis; melanin biosynthesis. Involved in the biosynthesis of melanin but also various secondary metabolites containing a naphthoquinone ring. Catalyzes the iterative condensation of five CoA-linked malonyl units to form a pentaketide intermediate. THNS subsequently catalyzes the dual intramolecular Claisen and aldol condensations of this linear intermediate to produce the fused ring of 1,3,6,8-tetrahydroxynaphthalene (THN). This Streptomyces coelicolor (strain ATCC BAA-471 / A3(2) / M145) protein is 1,3,6,8-tetrahydroxynaphthalene synthase.